The primary structure comprises 592 residues: Probable auxin efflux carrier component 1c (592 aa).

Residues 1-6 (MITGAD) lie on the Extracellular side of the membrane. A helical membrane pass occupies residues 7–27 (FYHVMTAMVPLYVAMILAYGS). Topologically, residues 28-38 (VKWWRIFTPDQ) are cytoplasmic. A helical transmembrane segment spans residues 39 to 59 (CSGINRFVALFAVPLLSFHFI). Position 51 (valine 51) interacts with (indol-3-yl)acetate. Residues 60-70 (STNNPYTMNLR) are Extracellular-facing. A helical transmembrane segment spans residues 71–91 (FIAADTLQKLIVLALLTLWSH). The Cytoplasmic portion of the chain corresponds to 92–100 (LSRRGSLEW). A helical membrane pass occupies residues 101-121 (TITLFSLSTLPNTLVMGIPLL). The (indol-3-yl)acetate site is built by asparagine 112 and leucine 114. Over 122 to 131 (KGMYGEFSGS) the chain is Extracellular. A helical membrane pass occupies residues 132–152 (LMVQIVVLQCIIWYTLMLFMF). Tyrosine 145 is a binding site for (indol-3-yl)acetate. Residues 153–452 (EYRGARILIT…LIRNPNTYSS (300 aa)) lie on the Cytoplasmic side of the membrane. 2 disordered regions span residues 214–236 (RSDV…SNLT) and 282–331 (GATP…AKGE). Residues 224–236 (GFSSTTPRPSNLT) show a composition bias toward polar residues. Over residues 309 to 318 (APNPAMAAPP) the composition is skewed to pro residues. A helical transmembrane segment spans residues 453-473 (LIGLIWSLVCFRWNFEMPAII). Residues 474–476 (LKS) are Extracellular-facing. The chain crosses the membrane as a helical span at residues 477–497 (ISILSDAGLGMAMFSLGLFMA). The Cytoplasmic portion of the chain corresponds to 498–511 (LQPRIIACGNKVAT). Residues 512-532 (FAMAVRFLTGPAVMAAASIAV) traverse the membrane as a helical segment. The Extracellular segment spans residues 533-537 (GLRGT). A helical transmembrane segment spans residues 538 to 558 (LLHVAIVQAALPQGIVPFVFA). 2 residues coordinate (indol-3-yl)acetate: isoleucine 552 and valine 553. Over 559–571 (KEYSVHPDILSTA) the chain is Cytoplasmic. The helical transmembrane segment at 572–592 (VIFGMLIALPITLVYYILLGL) threads the bilayer.

It belongs to the auxin efflux carrier (TC 2.A.69.1) family. Homodimer. In terms of tissue distribution, expressed at low levels in roots and leaves. Expressed in roots, stem bases, stems, leaves and young panicles.

The protein resides in the membrane. May act as a component of the auxin efflux carrier. In Oryza sativa subsp. japonica (Rice), this protein is Probable auxin efflux carrier component 1c.